Here is a 445-residue protein sequence, read N- to C-terminus: Probable fructoselysine/psicoselysine transporter FrlA (445 aa).

12 helical membrane passes run 10–30, 38–58, 93–113, 121–141, 155–175, 181–201, 236–256, 273–293, 334–354, 355–375, 389–410, and 417–435; these read LGFWAVLAIAVGTTVGSGIFV, AAGTPWLTVLAFVIGGLIVIP, GWASFWANDAPSLSIMALAIV, PIDPLLGKFIAAGLIIAFMLL, LITIAKIIPFTIVIGLGIFWF, AAPTTTAIGATGSFMALLAGI, CLLVLVLYTLLALVISGLMPF, IPALGSTAGIFVAITAMIVIL, IILQGALGIFFIFVSDLTSLL, GYFTLVMCFKNTLTFGSIIWC, AFGLMTTLAIASSLILVASTFV, and LICAVIVIATGLPAYAFWA.

Belongs to the amino acid-polyamine-organocation (APC) superfamily.

The protein resides in the cell inner membrane. The enzyme catalyses N(6)-(D-fructosyl)-L-lysine(in) = N(6)-(D-fructosyl)-L-lysine(out). It carries out the reaction N(6)-(D-psicosyl)-L-lysine(in) = N(6)-(D-psicosyl)-L-lysine(out). It participates in carbohydrate metabolism; fructoselysine degradation. Its function is as follows. Is likely involved in the transport of fructoselysine and psicoselysine to the cytoplasm, where they are degraded. The protein is Probable fructoselysine/psicoselysine transporter FrlA of Escherichia coli (strain K12).